Here is a 339-residue protein sequence, read N- to C-terminus: Glycerol-3-phosphate dehydrogenase [NAD(P)+] (339 aa).

NADPH is bound by residues Ser-11, Trp-12, and Lys-109. Residues Lys-109, Gly-140, and Ser-142 each coordinate sn-glycerol 3-phosphate. NADPH is bound at residue Ala-144. Lys-195, Asp-249, Ser-259, Arg-260, and Asn-261 together coordinate sn-glycerol 3-phosphate. The active-site Proton acceptor is the Lys-195. Residue Arg-260 coordinates NADPH. NADPH-binding residues include Val-284 and Glu-286.

Belongs to the NAD-dependent glycerol-3-phosphate dehydrogenase family.

The protein localises to the cytoplasm. It catalyses the reaction sn-glycerol 3-phosphate + NAD(+) = dihydroxyacetone phosphate + NADH + H(+). The enzyme catalyses sn-glycerol 3-phosphate + NADP(+) = dihydroxyacetone phosphate + NADPH + H(+). It functions in the pathway membrane lipid metabolism; glycerophospholipid metabolism. Its function is as follows. Catalyzes the reduction of the glycolytic intermediate dihydroxyacetone phosphate (DHAP) to sn-glycerol 3-phosphate (G3P), the key precursor for phospholipid synthesis. This Lactobacillus acidophilus (strain ATCC 700396 / NCK56 / N2 / NCFM) protein is Glycerol-3-phosphate dehydrogenase [NAD(P)+].